The primary structure comprises 172 residues: Inorganic pyrophosphatase (172 aa).

Substrate-binding residues include Lys-26, Arg-40, and Tyr-52. Positions 62, 67, and 99 each coordinate Mg(2+). Tyr-138 is a substrate binding site.

This sequence belongs to the PPase family. Homohexamer. Mg(2+) serves as cofactor.

It localises to the cytoplasm. The enzyme catalyses diphosphate + H2O = 2 phosphate + H(+). Catalyzes the hydrolysis of inorganic pyrophosphate (PPi) forming two phosphate ions. The chain is Inorganic pyrophosphatase from Saccharolobus solfataricus (strain ATCC 35092 / DSM 1617 / JCM 11322 / P2) (Sulfolobus solfataricus).